The sequence spans 644 residues: MVIVASSNMLRPDRIWLCGKYQTARTLYVVGNKSKRRNPSLEDWARSDSDRKMKLQQQEYNRKLKELKNLTANVSKMISKKSEKEVERSQIQSTEPSPETSTQLTQKNDSQRLDFLAKKSLFIPVVDIPASVSDRIGLAFKYLVSKSSQNWSMVLDQLEKNGGFKDIPSKDIRKFVYQIPKPHIPPIISRLKKMHHDAGVPVSPKLVNVFIDSLLLSPSIPSSVMSQIESYCDSIRSTSKKGRLPRETYELLIRAYGKNSNLEMVNSILTEMKQVGLQPSKNTFENILATSVYKSKDHKQAVEVFDTMKFLSDKTKPAERAYRDIIVSYVNNDDIEKALDLYNEMVENKVEVSQQIMVALARGCISRPELKVKAWEFIFEIYNQKWEPTIQTLEYVLYLAAKDGDVALCRALVNKLSETSSVTVRSFSFLLLGYSKSSLYNESPSIPPILAHENGIRFRRNILADSSYAPSSESSLPFLPVLDLVTEKEILAESSAMWAYANTIRPDLINIESANTYLNIGAKFGSLKEFLDRYNSATLLDRQGVPDTRVIEDENLAEVSVMDYTSTASVRSPLLDRNHTLKVPRDDMTYLIALKAASKARNYEFSQEVWSERGLYRKSDRIRLSQEQKRTNLIFNLQSLWSQL.

The transit peptide at 1-38 (MVIVASSNMLRPDRIWLCGKYQTARTLYVVGNKSKRRN) directs the protein to the mitochondrion. The disordered stretch occupies residues 78-108 (ISKKSEKEVERSQIQSTEPSPETSTQLTQKN). A compositionally biased stretch (polar residues) spans 89-108 (SQIQSTEPSPETSTQLTQKN). 3 PPR repeats span residues 245–279 (PRETYELLIRAYGKNSNLEMVNSILTEMKQVGLQP), 280–315 (SKNTFENILATSVYKSKDHKQAVEVFDTMKFLSDKT), and 318–352 (AERAYRDIIVSYVNNDDIEKALDLYNEMVENKVEV).

Belongs to the CCM1 family. Binds to mitochondrial small subunit 15S rRNA.

The protein localises to the mitochondrion. Regulates mitochondrial small subunit maturation by controlling 15S rRNA 5'-end processing. Localizes to the 5' precursor of the 15S rRNA in a position that is subsequently occupied by mS47 in the mature yeast mtSSU. Uses structure and sequence-specific RNA recognition, binding to a single-stranded region of the precursor and specifically recognizing bases -6 to -1. The exchange of Ccm1 for mS47 is coupled to the irreversible removal of precursor rRNA that is accompanied by conformational changes of the mitoribosomal proteins uS5m and mS26. These conformational changes signal completion of 5'-end rRNA processing through protection of the mature 5'-end of the 15S rRNA and stabilization of mS47. The removal of the 5' precursor together with the dissociation of Ccm1 may be catalyzed by the 5'-3' exoribonuclease Pet127. Involved in the specific removal of group I introns in mitochondrial encoded transcripts. This chain is Mitochondrial 15S rRNA processing factor CCM1 (CCM1), found in Meyerozyma guilliermondii (strain ATCC 6260 / CBS 566 / DSM 6381 / JCM 1539 / NBRC 10279 / NRRL Y-324) (Yeast).